The sequence spans 410 residues: Tegument protein VP16 homolog (410 aa).

The disordered stretch occupies residues 388 to 410 (PPSPSEILPGDPPRPPTCGFLTR).

The protein belongs to the herpesviridae tegument protein VP16 protein family. In terms of assembly, associates with the VP16-induced complex; binding to host HCFC1 activates VP16 for association with the octamer motif-binding host protein POU2F1, to form a multiprotein-DNA complex responsible for activating transcription of the viral immediate early genes.

Its subcellular location is the virion tegument. It is found in the host nucleus. Its function is as follows. Transcriptional activator of immediate-early (IE) gene products (alpha genes). Acts as a key activator of lytic infection by initiating the lytic program through the assembly of the transcriptional regulatory VP16-induced complex composed of VP16 and two cellular factors, HCFC1 and POU2F1. VP16-induced complex represents a regulatory switch: when it is on, it promotes IE-gene expression and thus lytic infection, and when it is off, it limits IE-gene transcription favoring latent infection. May play a role in the aggregation of tegument proteins around nucleocapsids during virus morphogenesis. The polypeptide is Tegument protein VP16 homolog (Varicella-zoster virus (strain Dumas) (HHV-3)).